The primary structure comprises 126 residues: Protein ApaG (126 aa).

One can recognise an ApaG domain in the interval 2 to 126 (KQLESSIRIE…FRLAAPGLLH (125 aa)).

This is Protein ApaG from Shewanella loihica (strain ATCC BAA-1088 / PV-4).